Here is a 95-residue protein sequence, read N- to C-terminus: Aspartyl/glutamyl-tRNA(Asn/Gln) amidotransferase subunit C (95 aa).

It belongs to the GatC family. In terms of assembly, heterotrimer of A, B and C subunits.

The catalysed reaction is L-glutamyl-tRNA(Gln) + L-glutamine + ATP + H2O = L-glutaminyl-tRNA(Gln) + L-glutamate + ADP + phosphate + H(+). It carries out the reaction L-aspartyl-tRNA(Asn) + L-glutamine + ATP + H2O = L-asparaginyl-tRNA(Asn) + L-glutamate + ADP + phosphate + 2 H(+). In terms of biological role, allows the formation of correctly charged Asn-tRNA(Asn) or Gln-tRNA(Gln) through the transamidation of misacylated Asp-tRNA(Asn) or Glu-tRNA(Gln) in organisms which lack either or both of asparaginyl-tRNA or glutaminyl-tRNA synthetases. The reaction takes place in the presence of glutamine and ATP through an activated phospho-Asp-tRNA(Asn) or phospho-Glu-tRNA(Gln). This chain is Aspartyl/glutamyl-tRNA(Asn/Gln) amidotransferase subunit C, found in Pseudomonas fluorescens (strain ATCC BAA-477 / NRRL B-23932 / Pf-5).